Reading from the N-terminus, the 938-residue chain is Protein SEY1 (938 aa).

Positions 1 to 159 are disordered; sequence MTSQSHGAPP…QKSAKSTPGS (159 aa). Over 1–839 the chain is Cytoplasmic; the sequence is MTSQSHGAPP…KRSTIQSTTQ (839 aa). Residues 33–45 show a composition bias toward low complexity; sequence SVSSSHSSHSPVT. Residues 74-94 are compositionally biased toward pro residues; sequence IAAPEPIAAPEPIPAPEPIAA. Residues 100 to 118 show a composition bias toward basic and acidic residues; sequence LKSEHKPVEREHKPVERKP. Polar residues predominate over residues 146–158; the sequence is VPTSQKSAKSTPG. Residues 192–423 enclose the GB1/RHD3-type G domain; that stretch reads GLDYHVVAVF…DPNYVFKPVY (232 aa). 202 to 209 is a binding site for GTP; the sequence is GSQSTGKS. The stretch at 603–630 forms a coiled coil; the sequence is SYDDTLAALEQELDTLRDHKSKVEIDRL. A helical transmembrane segment spans residues 840–860; that stretch reads IPLYMYGLLLLLGWNEIMAVL. Residues 861–863 lie on the Lumenal side of the membrane; that stretch reads RSP. Residues 864–884 traverse the membrane as a helical segment; the sequence is VYFMFLLVAAGAAYVIHTLHL. The Cytoplasmic segment spans residues 885 to 938; the sequence is WGPLTHMTNTMIAEATDMAKAKLKQVLNEAPTGETREREAPVGSSRDDVELKDL. Residues 911–938 form a disordered region; sequence LNEAPTGETREREAPVGSSRDDVELKDL. The segment covering 918-938 has biased composition (basic and acidic residues); the sequence is ETREREAPVGSSRDDVELKDL.

This sequence belongs to the TRAFAC class dynamin-like GTPase superfamily. GB1/RHD3 GTPase family. RHD3 subfamily.

It localises to the endoplasmic reticulum membrane. Functionally, cooperates with the reticulon proteins and tubule-shaping DP1 family proteins to generate and maintain the structure of the tubular endoplasmic reticulum network. Has GTPase activity, which is required for its function in ER organization. This is Protein SEY1 from Yarrowia lipolytica (strain CLIB 122 / E 150) (Yeast).